Consider the following 253-residue polypeptide: Triosephosphate isomerase, cytosolic (253 aa).

Substrate is bound by residues Asn10 and Lys12. The active-site Electrophile is the His96. Glu166 functions as the Proton acceptor in the catalytic mechanism.

Belongs to the triosephosphate isomerase family. In terms of assembly, homodimer.

The protein resides in the cytoplasm. The catalysed reaction is D-glyceraldehyde 3-phosphate = dihydroxyacetone phosphate. It functions in the pathway carbohydrate biosynthesis; gluconeogenesis. It participates in carbohydrate degradation; glycolysis; D-glyceraldehyde 3-phosphate from glycerone phosphate: step 1/1. In Oryza sativa subsp. japonica (Rice), this protein is Triosephosphate isomerase, cytosolic (TPI).